The primary structure comprises 1355 residues: DNA-directed RNA polymerase subunit beta' (1355 aa).

4 residues coordinate Zn(2+): C219, C293, C300, and C303. Residues 1331 to 1355 form a disordered region; it reads AEVEVDDEVDDDYEDDDEDDDDYED.

Belongs to the RNA polymerase beta' chain family. RpoC2 subfamily. As to quaternary structure, in cyanobacteria the RNAP catalytic core is composed of 2 alpha, 1 beta, 1 beta', 1 gamma and 1 omega subunit. When a sigma factor is associated with the core the holoenzyme is formed, which can initiate transcription. Requires Zn(2+) as cofactor.

The catalysed reaction is RNA(n) + a ribonucleoside 5'-triphosphate = RNA(n+1) + diphosphate. Its function is as follows. DNA-dependent RNA polymerase catalyzes the transcription of DNA into RNA using the four ribonucleoside triphosphates as substrates. This Trichormus variabilis (strain ATCC 29413 / PCC 7937) (Anabaena variabilis) protein is DNA-directed RNA polymerase subunit beta'.